A 260-amino-acid polypeptide reads, in one-letter code: Snake venom serine protease KN5 (260 aa).

The signal sequence occupies residues 1-18 (MVLIRVLANLLILQLSYA). Positions 19 to 24 (QKSSEL) are excised as a propeptide. The Peptidase S1 domain occupies 25–251 (VIGGDECNIN…HLDWIQSIIA (227 aa)). 5 cysteine pairs are disulfide-bonded: Cys31/Cys165, Cys100/Cys258, Cys144/Cys212, Cys176/Cys191, and Cys202/Cys227. His67 acts as the Charge relay system in catalysis. Residue Asn105 is glycosylated (N-linked (GlcNAc...) asparagine). Asp112 (charge relay system) is an active-site residue. Residues Asn124 and Asn172 are each glycosylated (N-linked (GlcNAc...) asparagine). Ser206 (charge relay system) is an active-site residue. N-linked (GlcNAc...) asparagine glycans are attached at residues Asn213 and Asn255.

This sequence belongs to the peptidase S1 family. Snake venom subfamily. In terms of assembly, monomer. In terms of tissue distribution, expressed by the venom gland.

The protein localises to the secreted. Its function is as follows. Snake venom serine protease that may act in the hemostasis system of the prey. This Trimeresurus stejnegeri (Chinese green tree viper) protein is Snake venom serine protease KN5.